Here is a 121-residue protein sequence, read N- to C-terminus: Small ribosomal subunit protein uS13 (121 aa).

Residues 97 to 121 (VRGQRTRTNARTRRGARKTVAGKKK) form a disordered region. The span at 100–121 (QRTRTNARTRRGARKTVAGKKK) shows a compositional bias: basic residues.

The protein belongs to the universal ribosomal protein uS13 family. Part of the 30S ribosomal subunit. Forms a loose heterodimer with protein S19. Forms two bridges to the 50S subunit in the 70S ribosome.

In terms of biological role, located at the top of the head of the 30S subunit, it contacts several helices of the 16S rRNA. In the 70S ribosome it contacts the 23S rRNA (bridge B1a) and protein L5 of the 50S subunit (bridge B1b), connecting the 2 subunits; these bridges are implicated in subunit movement. Contacts the tRNAs in the A and P-sites. The sequence is that of Small ribosomal subunit protein uS13 from Prochlorococcus marinus (strain MIT 9303).